Here is a 468-residue protein sequence, read N- to C-terminus: Cysteine--tRNA ligase (468 aa).

Position 33 (cysteine 33) interacts with Zn(2+). A 'HIGH' region motif is present at residues 35 to 45; sequence ATVQGLPHIGH. 3 residues coordinate Zn(2+): cysteine 211, histidine 236, and glutamate 240. The 'KMSKS' region motif lies at 267-271; that stretch reads KMSKS. ATP is bound at residue lysine 270.

The protein belongs to the class-I aminoacyl-tRNA synthetase family. As to quaternary structure, monomer. Zn(2+) is required as a cofactor.

Its subcellular location is the cytoplasm. The catalysed reaction is tRNA(Cys) + L-cysteine + ATP = L-cysteinyl-tRNA(Cys) + AMP + diphosphate. In Mycobacterium avium (strain 104), this protein is Cysteine--tRNA ligase.